Consider the following 145-residue polypeptide: 3-hydroxyacyl-[acyl-carrier-protein] dehydratase FabZ (145 aa).

Residue His48 is part of the active site.

Belongs to the thioester dehydratase family. FabZ subfamily.

The protein resides in the cytoplasm. It carries out the reaction a (3R)-hydroxyacyl-[ACP] = a (2E)-enoyl-[ACP] + H2O. Functionally, involved in unsaturated fatty acids biosynthesis. Catalyzes the dehydration of short chain beta-hydroxyacyl-ACPs and long chain saturated and unsaturated beta-hydroxyacyl-ACPs. In Cellvibrio japonicus (strain Ueda107) (Pseudomonas fluorescens subsp. cellulosa), this protein is 3-hydroxyacyl-[acyl-carrier-protein] dehydratase FabZ.